Reading from the N-terminus, the 510-residue chain is 2-isopropylmalate synthase (510 aa).

The Pyruvate carboxyltransferase domain maps to 5–267 (LVIFDTTLRD…DTRIDTTQIV (263 aa)). Mn(2+)-binding residues include aspartate 14, histidine 202, histidine 204, and asparagine 238. The tract at residues 392–510 (RLLSLHAVSE…SSLERTHPQI (119 aa)) is regulatory domain.

It belongs to the alpha-IPM synthase/homocitrate synthase family. LeuA type 1 subfamily. Homodimer. The cofactor is Mn(2+).

The protein localises to the cytoplasm. The enzyme catalyses 3-methyl-2-oxobutanoate + acetyl-CoA + H2O = (2S)-2-isopropylmalate + CoA + H(+). It participates in amino-acid biosynthesis; L-leucine biosynthesis; L-leucine from 3-methyl-2-oxobutanoate: step 1/4. Catalyzes the condensation of the acetyl group of acetyl-CoA with 3-methyl-2-oxobutanoate (2-ketoisovalerate) to form 3-carboxy-3-hydroxy-4-methylpentanoate (2-isopropylmalate). This Nitrosomonas europaea (strain ATCC 19718 / CIP 103999 / KCTC 2705 / NBRC 14298) protein is 2-isopropylmalate synthase.